Here is a 196-residue protein sequence, read N- to C-terminus: Autophagy-related protein 31 (196 aa).

Residues 20 to 45 (IKNNKGPSNDDQPAYNNESKSTDGSD) form a disordered region. The span at 22 to 43 (NNKGPSNDDQPAYNNESKSTDG) shows a compositional bias: polar residues. S38 and S40 each carry phosphoserine. Position 41 is a phosphothreonine (T41). Residues S44 and S116 each carry the phosphoserine modification. A compositionally biased stretch (polar residues) spans 120-129 (EENQMRTLSS). The interval 120-145 (EENQMRTLSSHGDDKSNDEEEELSVD) is disordered. A phosphoserine mark is found at S135, S143, S146, S153, S174, and S195. Residues 135 to 144 (SNDEEEELSV) show a composition bias toward acidic residues.

In terms of assembly, forms a stable complex with ATG17 and ATG29. Interacts directly with ATG29. The ATG17-ATG29-ATG31 complex interacts with the ATG1-ATG13 complex. Note=The interaction with the ATG1-ATG13 complex is induced by starvation. Highly phosphorylated. Ser-174 is phosphorylated constitutively. Phosphorylation at Ser-174 is required for autophagy induced by various autophagy stimuli such as nitrogen starvation and rapamycin treatment.

The protein localises to the cytoplasm. It localises to the cytoskeleton. The protein resides in the preautophagosomal structure. Functionally, plays a role in starvation-induced autophagy. Involved in mitophagy. Functions with ATG17 and ATG29 at the preautophagosomal structure (PAS) in order to form normal autophagosomes under starvation conditions. May be involved in microtubule function, such as chromosome segregation and karyogamy. The chain is Autophagy-related protein 31 (ATG31) from Saccharomyces cerevisiae (strain ATCC 204508 / S288c) (Baker's yeast).